The chain runs to 647 residues: UvrABC system protein C (647 aa).

The GIY-YIG domain maps to 16 to 95; it reads VEPGVYRFRD…IKEFDPRFNV (80 aa). The 36-residue stretch at 208 to 243 folds into the UVR domain; the sequence is DRFARELEQQMNAAAAELDFERAARLRDDLGALKRA.

It belongs to the UvrC family. As to quaternary structure, interacts with UvrB in an incision complex.

The protein resides in the cytoplasm. Its function is as follows. The UvrABC repair system catalyzes the recognition and processing of DNA lesions. UvrC both incises the 5' and 3' sides of the lesion. The N-terminal half is responsible for the 3' incision and the C-terminal half is responsible for the 5' incision. This is UvrABC system protein C from Mycolicibacterium paratuberculosis (strain ATCC BAA-968 / K-10) (Mycobacterium paratuberculosis).